The primary structure comprises 673 residues: Annexin A6 (673 aa).

Alanine 2 carries the post-translational modification N-acetylalanine. The residue at position 13 (serine 13) is a Phosphoserine. Annexin repeat units lie at residues 20 to 91 (FDAN…NLMR), 92 to 163 (PLAY…VLLQ), 175 to 247 (DLVQ…AVVK), 251 to 322 (STPE…KLCG), 363 to 434 (FNPD…GLMM), 435 to 506 (PPAH…SLAT), 521 to 595 (EDAQ…AIVQ), and 599 to 670 (NKPL…ALCG). A Phosphotyrosine modification is found at tyrosine 30. 4 positions are modified to N6-acetyllysine: lysine 63, lysine 68, lysine 75, and lysine 81. Phosphotyrosine is present on tyrosine 201. Residues lysine 306, lysine 370, and lysine 418 each carry the N6-acetyllysine modification. Serine 422 carries the phosphoserine modification. The residue at position 483 (lysine 483) is an N6-acetyllysine. Position 537 is a phosphoserine (serine 537). An N6-acetyllysine modification is found at lysine 620.

It belongs to the annexin family.

It localises to the cytoplasm. The protein localises to the melanosome. In terms of biological role, may associate with CD21. May regulate the release of Ca(2+) from intracellular stores. This Mus musculus (Mouse) protein is Annexin A6 (Anxa6).